The sequence spans 191 residues: Cell division protein SepF (191 aa).

Residues Phe-153 to Pro-178 show a composition bias toward polar residues. A disordered region spans residues Phe-153–Asn-191.

The protein belongs to the SepF family. As to quaternary structure, homodimer. Interacts with FtsZ.

The protein resides in the cytoplasm. Functionally, cell division protein that is part of the divisome complex and is recruited early to the Z-ring. Probably stimulates Z-ring formation, perhaps through the cross-linking of FtsZ protofilaments. Its function overlaps with FtsA. In Prochlorococcus marinus subsp. pastoris (strain CCMP1986 / NIES-2087 / MED4), this protein is Cell division protein SepF.